Here is an 87-residue protein sequence, read N- to C-terminus: Antitoxin RelB1 (87 aa).

Antitoxin component of a type II toxin-antitoxin (TA) system. Neutralizes the effect of cognate toxin RelE1, but no other RelE or ParE toxin. This chain is Antitoxin RelB1 (relB1), found in Caulobacter vibrioides (strain ATCC 19089 / CIP 103742 / CB 15) (Caulobacter crescentus).